The following is a 687-amino-acid chain: Protein FAR1-RELATED SEQUENCE 1 (687 aa).

Residues 35 to 137 (EFYKEYANSV…VKEHNHEIFT (103 aa)) enclose the FAR1 domain. Residues 211 to 254 (KAMHGCRPRVILTKHDQMLKEAVLEVFPSSRHCFYMWDTLGQMP) form the MULE domain. The segment at 440 to 476 (FVVVWNSESSEVVCSCRLFELKGFLCRHAMIVLQMSG) adopts an SWIM-type zinc-finger fold. The stretch at 540–562 (NVLNEALRKWENKSNLIQNLEES) forms a coiled coil.

It belongs to the FHY3/FAR1 family. In terms of tissue distribution, expressed in rosette and cauline leaves, inflorescences stems, flowers and siliques.

The protein resides in the nucleus. Putative transcription activator involved in regulating light control of development. The sequence is that of Protein FAR1-RELATED SEQUENCE 1 (FRS1) from Arabidopsis thaliana (Mouse-ear cress).